Here is a 306-residue protein sequence, read N- to C-terminus: Ribosomal protein L11 methyltransferase (306 aa).

Residues Thr-139, Gly-173, Asp-195, and Asn-242 each coordinate S-adenosyl-L-methionine.

It belongs to the methyltransferase superfamily. PrmA family.

It localises to the cytoplasm. It catalyses the reaction L-lysyl-[protein] + 3 S-adenosyl-L-methionine = N(6),N(6),N(6)-trimethyl-L-lysyl-[protein] + 3 S-adenosyl-L-homocysteine + 3 H(+). Functionally, methylates ribosomal protein L11. The chain is Ribosomal protein L11 methyltransferase from Nostoc sp. (strain PCC 7120 / SAG 25.82 / UTEX 2576).